The following is an 870-amino-acid chain: Ribonucleoside-diphosphate reductase large subunit (870 aa).

The ATP-cone domain occupies Met-16–Lys-110. ATP-binding positions include Lys-20–Arg-21, Glu-26–Lys-32, Thr-71, and Asp-75. A GDP-binding site is contributed by Ser-235. Cys-236 and Cys-463 form a disulfide bridge. DTTP contacts are provided by residues Asp-244 to Ile-246, Lys-261, Arg-274, and Arg-281 to Gly-282. Asn-446 contacts GDP. The active-site Proton acceptor is Asn-446. Residue Cys-448 is the Cysteine radical intermediate of the active site. GDP contacts are provided by residues Glu-450 and Thr-632–Thr-635. Glu-450 functions as the Proton acceptor in the catalytic mechanism. Positions Lys-789 to Tyr-854 are disordered. Residues Asn-796–Ser-811 show a composition bias toward low complexity. A compositionally biased stretch (polar residues) spans Asn-812–Thr-831. Positions Gln-832–Gln-844 are enriched in low complexity.

It belongs to the ribonucleoside diphosphate reductase large chain family. Heterodimer of a large and a small subunit.

The protein localises to the cytoplasm. The catalysed reaction is a 2'-deoxyribonucleoside 5'-diphosphate + [thioredoxin]-disulfide + H2O = a ribonucleoside 5'-diphosphate + [thioredoxin]-dithiol. Its activity is regulated as follows. Under complex allosteric control mediated by deoxynucleoside triphosphates and ATP binding to separate specificity and activation sites on the large subunit. The type of nucleotide bound at the specificity site determines substrate preference. It seems probable that ATP makes the enzyme reduce CDP and UDP, dGTP favors ADP reduction and dTTP favors GDP reduction. Stimulated by ATP and inhibited by dATP binding to the activity site. Provides the precursors necessary for DNA synthesis. Catalyzes the biosynthesis of deoxyribonucleotides from the corresponding ribonucleotides. The protein is Ribonucleoside-diphosphate reductase large subunit (rnrA) of Dictyostelium discoideum (Social amoeba).